Consider the following 513-residue polypeptide: Cytochrome P450 86A1 (513 aa).

A helical transmembrane segment spans residues 7–27; that stretch reads ILTGYAVAALSVYALWFYFLS. Residue cysteine 456 coordinates heme.

Belongs to the cytochrome P450 family. Requires heme as cofactor. Expressed in roots.

It is found in the membrane. It carries out the reaction an omega-methyl-long-chain fatty acid + reduced [NADPH--hemoprotein reductase] + O2 = an omega-hydroxy-long-chain fatty acid + oxidized [NADPH--hemoprotein reductase] + H2O + H(+). Catalyzes the omega-hydroxylation of various fatty acids (FA). Acts on saturated and unsaturated fatty acids with chain lengths from C12 to C18 but not on hexadecane. The polypeptide is Cytochrome P450 86A1 (CYP86A1) (Arabidopsis thaliana (Mouse-ear cress)).